Consider the following 395-residue polypeptide: Flap endonuclease 1 (395 aa).

The segment at 1–104 is N-domain; the sequence is MGIKHLYQII…GELAKRFMRK (104 aa). Asp34 serves as a coordination point for Mg(2+). Arg47 and Arg70 together coordinate DNA. Mg(2+) is bound by residues Asp86, Glu158, Glu160, Asp179, and Asp181. The segment at 122–253 is I-domain; the sequence is EVEKFSRRTV…NTALKLIRDH (132 aa). Glu158 contacts DNA. DNA contacts are provided by Gly231 and Asp233. Residue Asp233 coordinates Mg(2+). The interval 341 to 349 is interaction with PCNA; sequence QQSRLEGFF. Residues 360–389 are compositionally biased toward basic and acidic residues; the sequence is AVLKRKHEEKLELQKKKKKEDAKAKKEAKS. Positions 360–395 are disordered; that stretch reads AVLKRKHEEKLELQKKKKKEDAKAKKEAKSKPRGTT.

Belongs to the XPG/RAD2 endonuclease family. FEN1 subfamily. Interacts with PCNA. Three molecules of FEN1 bind to one PCNA trimer with each molecule binding to one PCNA monomer. PCNA stimulates the nuclease activity without altering cleavage specificity. Requires Mg(2+) as cofactor. In terms of processing, phosphorylated. Phosphorylation upon DNA damage induces relocalization to the nuclear plasma.

It localises to the nucleus. The protein resides in the nucleolus. Its subcellular location is the nucleoplasm. The protein localises to the mitochondrion. Its function is as follows. Structure-specific nuclease with 5'-flap endonuclease and 5'-3' exonuclease activities involved in DNA replication and repair. During DNA replication, cleaves the 5'-overhanging flap structure that is generated by displacement synthesis when DNA polymerase encounters the 5'-end of a downstream Okazaki fragment. It enters the flap from the 5'-end and then tracks to cleave the flap base, leaving a nick for ligation. Also involved in the long patch base excision repair (LP-BER) pathway, by cleaving within the apurinic/apyrimidinic (AP) site-terminated flap. Acts as a genome stabilization factor that prevents flaps from equilibrating into structures that lead to duplications and deletions. Also possesses 5'-3' exonuclease activity on nicked or gapped double-stranded DNA, and exhibits RNase H activity. Also involved in replication and repair of rDNA and in repairing mitochondrial DNA. In Ajellomyces capsulatus (strain NAm1 / WU24) (Darling's disease fungus), this protein is Flap endonuclease 1.